A 500-amino-acid polypeptide reads, in one-letter code: tRNA modification GTPase MnmE (500 aa).

3 residues coordinate (6S)-5-formyl-5,6,7,8-tetrahydrofolate: Arg-24, Glu-120, and Lys-159. The region spanning 256–420 (GIPVAIIGET…LEKKLVQAAA (165 aa)) is the TrmE-type G domain. Asn-266 provides a ligand contact to K(+). GTP contacts are provided by residues 266-271 (NAGKST), 285-291 (SDIHGTT), and 310-313 (DTAG). Mg(2+) is bound at residue Ser-270. Residues Ser-285, Ile-287, and Thr-290 each coordinate K(+). Thr-291 lines the Mg(2+) pocket. Lys-500 contributes to the (6S)-5-formyl-5,6,7,8-tetrahydrofolate binding site.

It belongs to the TRAFAC class TrmE-Era-EngA-EngB-Septin-like GTPase superfamily. TrmE GTPase family. In terms of assembly, homodimer. Heterotetramer of two MnmE and two MnmG subunits. The cofactor is K(+).

The protein resides in the cytoplasm. Exhibits a very high intrinsic GTPase hydrolysis rate. Involved in the addition of a carboxymethylaminomethyl (cmnm) group at the wobble position (U34) of certain tRNAs, forming tRNA-cmnm(5)s(2)U34. The protein is tRNA modification GTPase MnmE of Phocaeicola vulgatus (strain ATCC 8482 / DSM 1447 / JCM 5826 / CCUG 4940 / NBRC 14291 / NCTC 11154) (Bacteroides vulgatus).